The sequence spans 176 residues: Cytochrome c oxidase subunit 5b-1, mitochondrial (176 aa).

The N-terminal 55 residues, 1–55 (MWRRIVSSQLKTLAADVVAASPRRSIAATTRPVGFYLAANRSAISASSFVIPRRF), are a transit peptide targeting the mitochondrion. Positions 122, 146, and 149 each coordinate Zn(2+). A disordered region spans residues 157–176 (VVGPGGPPDGHGDEDDEHHH).

It belongs to the cytochrome c oxidase subunit 5B (TC 3.D.4.11) family.

It is found in the mitochondrion inner membrane. Functionally, this protein is one of the nuclear-coded polypeptide chains of cytochrome c oxidase, the terminal oxidase in mitochondrial electron transport. This Arabidopsis thaliana (Mouse-ear cress) protein is Cytochrome c oxidase subunit 5b-1, mitochondrial (COX5B-1).